The chain runs to 288 residues: Small ribosomal subunit protein uS9m (288 aa).

Residues 269–288 (VERKKPGKKKARKMPTWVKR) are disordered.

Belongs to the universal ribosomal protein uS9 family.

Its subcellular location is the mitochondrion. The protein is Small ribosomal subunit protein uS9m (MRPS9) of Candida glabrata (strain ATCC 2001 / BCRC 20586 / JCM 3761 / NBRC 0622 / NRRL Y-65 / CBS 138) (Yeast).